The sequence spans 424 residues: CinA-like protein (424 aa).

This sequence belongs to the CinA family.

In Shewanella woodyi (strain ATCC 51908 / MS32), this protein is CinA-like protein.